The following is a 436-amino-acid chain: MGKVAVIGAGLAGSEAAFKIATSGFKVDLYEMRPVKTTPAHRTEGFAELVCSNSLGGKDITTGSGLLKEEMRLLGSLIVSVAEEFSVPAGGALAVDRVKFSRRITEILENHPNIKVIRKEVTQLPEGYNFIIIATGPLTSEAFSKVIQRLTGSEYLYFYDAIAPTVDADTVDFSKGFWGDRYGKGKGDYFNCVLNEEEYEIFYNELINGKQVPLKDFEKAVFFEGCLPIEEMARRGKQTLLFGPMKPVGLIDPKTGKQPFAVIQLRKENREGTLLSLVGFQTKLKYPEQKRIFRLIPALKDATFVRLGSIHRNTFIQSHRVLKPTLQLKKDPRILFAGQITGVEGYAASAATGILAGINVVRMLKGKEPTVPPETTMLGGLVRYITEPKEELQPMNPNFSLLPDLDKKVRDKRRRKLLKAERALKDMEIFASQWKN.

8 to 13 is a binding site for FAD; that stretch reads GAGLAG.

The protein belongs to the MnmG family. TrmFO subfamily. Requires FAD as cofactor.

It is found in the cytoplasm. It carries out the reaction uridine(54) in tRNA + (6R)-5,10-methylene-5,6,7,8-tetrahydrofolate + NADH + H(+) = 5-methyluridine(54) in tRNA + (6S)-5,6,7,8-tetrahydrofolate + NAD(+). The catalysed reaction is uridine(54) in tRNA + (6R)-5,10-methylene-5,6,7,8-tetrahydrofolate + NADPH + H(+) = 5-methyluridine(54) in tRNA + (6S)-5,6,7,8-tetrahydrofolate + NADP(+). In terms of biological role, catalyzes the folate-dependent formation of 5-methyl-uridine at position 54 (M-5-U54) in all tRNAs. This chain is Methylenetetrahydrofolate--tRNA-(uracil-5-)-methyltransferase TrmFO, found in Persephonella marina (strain DSM 14350 / EX-H1).